A 292-amino-acid chain; its full sequence is Aquaporin-3 (292 aa).

Residues 1 to 24 (MGRQKELMNRCGEMLHIRYRLLRQ) are Cytoplasmic-facing. The helical transmembrane segment at 25 to 42 (ALAECLGTLILVMFGCGS) threads the bilayer. Over 43–56 (VAQVVLSRGTHGGF) the chain is Extracellular. A helical membrane pass occupies residues 57–74 (LTINLAFGFAVTLAILVA). Topologically, residues 75 to 78 (GQVS) are cytoplasmic. Positions 79–92 (GAHLNPAVTFAMCF) form an intramembrane region, discontinuously helical. The short motif at 83–85 (NPA) is the NPA 1 element. The Cytoplasmic segment spans residues 93–100 (LAREPWIK). A helical membrane pass occupies residues 101–121 (LPIYTLAQTLGAFLGAGIVFG). The Extracellular portion of the chain corresponds to 122–159 (LYYDAIWAFAGNELVVSGPNGTAGIFATYPSGHLDMVN). Asn-141 is a glycosylation site (N-linked (GlcNAc...) asparagine). A helical transmembrane segment spans residues 160–177 (GFFDQFIGTAALIVCVLA). Residues 178–189 (IVDPYNNPVPRG) lie on the Cytoplasmic side of the membrane. The helical transmembrane segment at 190-206 (LEAFTVGLVVLVIGTSM) threads the bilayer. The Extracellular portion of the chain corresponds to 207–210 (GFNS). Residues 211–224 (GYAVNPARDFGPRL) constitute an intramembrane region (discontinuously helical). The short motif at 215–217 (NPA) is the NPA 2 element. The Extracellular portion of the chain corresponds to 225 to 242 (FTALAGWGSEVFTTGQNW). The chain crosses the membrane as a helical span at residues 243–264 (WWVPIVSPLLGSIGGVFVYQLM). Residues 265–292 (IGCHLEQPPPSTEAENVKLAHMKHKEQI) are Cytoplasmic-facing.

This sequence belongs to the MIP/aquaporin (TC 1.A.8) family. Homotetramer; each monomer provides an independent glycerol/water pore. Could also exist in other oligomeric states. Detected in kidney medulla and papilla, in collecting duct cells. Detected in colon.

The protein resides in the cell membrane. It is found in the basolateral cell membrane. The catalysed reaction is glycerol(in) = glycerol(out). It catalyses the reaction H2O(in) = H2O(out). The enzyme catalyses urea(in) = urea(out). It carries out the reaction H2O2(out) = H2O2(in). Its activity is regulated as follows. Channel activity is inhibited by mercury ions. Aquaglyceroporins form homotetrameric transmembrane channels, with each monomer independently mediating glycerol and water transport across the plasma membrane along their osmotic gradient. Could also be permeable to urea. Also participates in cell permeability to H2O2 and H2O2-mediated signaling. In skin, transports glycerol to the epidermis and stratum corneum, where it maintains hydration, elasticity, and supports lipid biosynthesis for barrier repair. In kidney, contributes to the reabsorption of water, helping the body maintain proper fluid balance. The polypeptide is Aquaporin-3 (Rattus norvegicus (Rat)).